The primary structure comprises 205 residues: MAEASSANLGSGCEEKRHEGSSSESVPPGTTISRVKLLDTMVDTFLQKLVAAGSYQRFTDCYKCFYQLQPAMTQQIYDKFIAQLQTSIREEISDIKEEGNLEAVLNALDKIVEEGKVRKEPAWRPSGIPEKDLHSVMAPYFLQQRDTLRRHVQKQEAENQQLADAVLAGRRQVEELQLQVQAQQQAWQALHREQRELVAVLREPE.

Residues 1 to 30 (MAEASSANLGSGCEEKRHEGSSSESVPPGT) are disordered. The stretch at 141–193 (FLQQRDTLRRHVQKQEAENQQLADAVLAGRRQVEELQLQVQAQQQAWQALHRE) forms a coiled coil.

As to quaternary structure, component of the MIS12 complex composed of MIS12, DSN1, NSL1 and PMF1. Interacts with COPS7A. Interacts via its coiled-coil domain with the leucine-zipper domain of NFE2L2. The interaction with NFE2L2 is required for the transcriptional regulation of SSAT. Highest levels of expression in heart and skeletal muscle, with significant levels expressed in kidney and liver.

Its subcellular location is the nucleus. It localises to the chromosome. The protein resides in the centromere. The protein localises to the kinetochore. Its function is as follows. Part of the MIS12 complex which is required for normal chromosome alignment and segregation and kinetochore formation during mitosis. May act as a cotranscription partner of NFE2L2 involved in regulation of polyamine-induced transcription of SSAT. The protein is Polyamine-modulated factor 1 of Homo sapiens (Human).